Consider the following 389-residue polypeptide: Putative cyclin-F3-1 (389 aa).

Positions 1–103 (MEAAAAAAAE…GAAGGSRQPV (103 aa)) are disordered. Over residues 19-43 (VEGAAVAAVAPEAAAEGPSEPNAGE) the composition is skewed to low complexity.

This sequence belongs to the cyclin family. Cyclin F subfamily.

This is Putative cyclin-F3-1 (CYCF3-1) from Oryza sativa subsp. japonica (Rice).